Reading from the N-terminus, the 221-residue chain is GFP-like non-fluorescent chromoprotein (221 aa).

The 2-iminomethyl-5-imidazolinone (Gln-Gly) cross-link spans 62–64; the sequence is QYG. Tyr-63 is subject to (E)-2,3-didehydrotyrosine.

The protein belongs to the GFP family. Homotetramer. In terms of processing, contains a chromophore consisting of modified amino acid residues. The chromophore is formed by autocatalytic backbone condensation between Xaa-N and Gly-(N+2), oxidation of Tyr-(N+1) to didehydrotyrosine, and formation of a double bond to the alpha-amino nitrogen of residue Xaa-N. Maturation of the chromophore requires nothing other than molecular oxygen.

Functionally, thought to play a role in photoprotection of the coral's resident symbiont microalgae's photosystems from photoinhibition caused by high light levels found near the surface of coral reefs. The protein is GFP-like non-fluorescent chromoprotein of Montipora efflorescens (Pore coral).